Consider the following 979-residue polypeptide: UPF0182 protein MRA_0066 (979 aa).

7 helical membrane passes run 19–39, 63–83, 114–134, 174–194, 211–231, 260–280, and 288–308; these read LVTA…LVDI, LAIV…ALLL, LFGW…ASFD, WLFV…YLFG, VQLA…YWLD, KLVL…AIFL, and MAAA…PLLM. A disordered region spans residues 898 to 948; that stretch reads GTGRVATARGGDAASAPPPGAGGPAPPQAVPPPRTTQPPAAPPRGPDVPPA. The span at 913–946 shows a compositional bias: pro residues; the sequence is APPPGAGGPAPPQAVPPPRTTQPPAAPPRGPDVP.

The protein belongs to the UPF0182 family.

Its subcellular location is the cell membrane. The protein is UPF0182 protein MRA_0066 of Mycobacterium tuberculosis (strain ATCC 25177 / H37Ra).